We begin with the raw amino-acid sequence, 105 residues long: Small ribosomal subunit protein uS10 (105 aa).

The protein belongs to the universal ribosomal protein uS10 family. Part of the 30S ribosomal subunit.

Involved in the binding of tRNA to the ribosomes. The polypeptide is Small ribosomal subunit protein uS10 (Rickettsia canadensis (strain McKiel)).